Reading from the N-terminus, the 340-residue chain is Fructose-1,6-bisphosphatase class 1 (340 aa).

Residues Glu107, Asp126, Leu128, and Asp129 each coordinate Mg(2+). Position 215 (Asn215) interacts with substrate. Glu287 serves as a coordination point for Mg(2+).

This sequence belongs to the FBPase class 1 family. Homotetramer. The cofactor is Mg(2+).

It is found in the cytoplasm. The enzyme catalyses beta-D-fructose 1,6-bisphosphate + H2O = beta-D-fructose 6-phosphate + phosphate. It participates in carbohydrate biosynthesis; gluconeogenesis. The sequence is that of Fructose-1,6-bisphosphatase class 1 from Brucella canis (strain ATCC 23365 / NCTC 10854 / RM-666).